A 363-amino-acid polypeptide reads, in one-letter code: tRNA(Met) cytidine acetate ligase (363 aa).

Residues 7 to 20, Gly96, Asn152, and Arg175 contribute to the ATP site; that span reads IAEF…HKYL.

Belongs to the TmcAL family.

It localises to the cytoplasm. The enzyme catalyses cytidine(34) in elongator tRNA(Met) + acetate + ATP = N(4)-acetylcytidine(34) in elongator tRNA(Met) + AMP + diphosphate. In terms of biological role, catalyzes the formation of N(4)-acetylcytidine (ac(4)C) at the wobble position of elongator tRNA(Met), using acetate and ATP as substrates. First activates an acetate ion to form acetyladenylate (Ac-AMP) and then transfers the acetyl group to tRNA to form ac(4)C34. This chain is tRNA(Met) cytidine acetate ligase, found in Streptococcus thermophilus (strain CNRZ 1066).